The following is a 279-amino-acid chain: Putative hydro-lyase GDI0188/Gdia_2258 (279 aa).

The protein belongs to the D-glutamate cyclase family.

This is Putative hydro-lyase GDI0188/Gdia_2258 from Gluconacetobacter diazotrophicus (strain ATCC 49037 / DSM 5601 / CCUG 37298 / CIP 103539 / LMG 7603 / PAl5).